The chain runs to 391 residues: Phosphoglycerate kinase (391 aa).

Substrate-binding positions include 21 to 23 (DLN), Arg-36, 59 to 62 (HLGR), Arg-113, and Arg-146. ATP-binding positions include Lys-197, Glu-319, and 345 to 348 (GGDT).

It belongs to the phosphoglycerate kinase family. In terms of assembly, monomer.

It localises to the cytoplasm. The catalysed reaction is (2R)-3-phosphoglycerate + ATP = (2R)-3-phospho-glyceroyl phosphate + ADP. Its pathway is carbohydrate degradation; glycolysis; pyruvate from D-glyceraldehyde 3-phosphate: step 2/5. This chain is Phosphoglycerate kinase, found in Shewanella frigidimarina (strain NCIMB 400).